The primary structure comprises 228 residues: MELKEPIIAINFKTYIEATGKRALEIAKAAERVWKDTGVTIVVAPQLVDLRMIAENVEIPVFAQHIDPIKPGSHTGHVLPEAVKEAGAVGTLLNHSENRMILADLEAAISRAKEVGLITMVCSNNPAVSAAVAALDPDYVAVEPPELIGTGIPVSKAKPEVITDTVELVRKVNPKVKVLCGAGISTGEDVKKAIELGTVGVLLASGVTKAKDPEKAIRDLVSGIIRKD.

Substrate is bound at residue 11-13; the sequence is NFK. Residue His-95 is the Electrophile of the active site. Glu-143 serves as the catalytic Proton acceptor. Substrate-binding positions include Ile-148, Gly-183, and 204 to 205; that span reads AS.

This sequence belongs to the triosephosphate isomerase family. As to quaternary structure, homotetramer; dimer of dimers.

The protein localises to the cytoplasm. The catalysed reaction is D-glyceraldehyde 3-phosphate = dihydroxyacetone phosphate. It functions in the pathway carbohydrate biosynthesis; gluconeogenesis. Its pathway is carbohydrate degradation; glycolysis; D-glyceraldehyde 3-phosphate from glycerone phosphate: step 1/1. Its function is as follows. Involved in the gluconeogenesis. Catalyzes stereospecifically the conversion of dihydroxyacetone phosphate (DHAP) to D-glyceraldehyde-3-phosphate (G3P). The polypeptide is Triosephosphate isomerase (Pyrococcus abyssi (strain GE5 / Orsay)).